Reading from the N-terminus, the 294-residue chain is 4-hydroxy-tetrahydrodipicolinate synthase (294 aa).

A pyruvate-binding site is contributed by Thr44. The active-site Proton donor/acceptor is Tyr132. Lys161 (schiff-base intermediate with substrate) is an active-site residue. Ile206 is a binding site for pyruvate.

This sequence belongs to the DapA family. In terms of assembly, homotetramer; dimer of dimers.

The protein localises to the cytoplasm. It carries out the reaction L-aspartate 4-semialdehyde + pyruvate = (2S,4S)-4-hydroxy-2,3,4,5-tetrahydrodipicolinate + H2O + H(+). It participates in amino-acid biosynthesis; L-lysine biosynthesis via DAP pathway; (S)-tetrahydrodipicolinate from L-aspartate: step 3/4. With respect to regulation, is not inhibited by (S)-lysine, in contrast to E.coli DapA. Catalyzes the condensation of (S)-aspartate-beta-semialdehyde [(S)-ASA] and pyruvate to 4-hydroxy-tetrahydrodipicolinate (HTPA). The polypeptide is 4-hydroxy-tetrahydrodipicolinate synthase (Thermotoga maritima (strain ATCC 43589 / DSM 3109 / JCM 10099 / NBRC 100826 / MSB8)).